The chain runs to 89 residues: UPF0147 protein Saci_0891 (89 aa).

It belongs to the UPF0147 family.

The chain is UPF0147 protein Saci_0891 from Sulfolobus acidocaldarius (strain ATCC 33909 / DSM 639 / JCM 8929 / NBRC 15157 / NCIMB 11770).